The chain runs to 98 residues: Putative pterin-4-alpha-carbinolamine dehydratase (98 aa).

The protein belongs to the pterin-4-alpha-carbinolamine dehydratase family.

It catalyses the reaction (4aS,6R)-4a-hydroxy-L-erythro-5,6,7,8-tetrahydrobiopterin = (6R)-L-erythro-6,7-dihydrobiopterin + H2O. The sequence is that of Putative pterin-4-alpha-carbinolamine dehydratase from Mesorhizobium japonicum (strain LMG 29417 / CECT 9101 / MAFF 303099) (Mesorhizobium loti (strain MAFF 303099)).